A 670-amino-acid polypeptide reads, in one-letter code: MTNIQTQLDNLRKTLRQYEYEYHVLDNPSVPDSEYDRLFHQLKALELEHPEFLTSDSPTQRVGAKPLSGFSQIRHEIPMLSLDNAFSDAEFNAFVKRIEDRLILLPKPLTFCCEPKLDGLAVSILYVNGELTQAATRGDGTTGEDITANIRTIRNVPLQLLTDNPPARLEVRGEVFMPHAGFERLNKYALEHNEKTFANPRNAAAGSLRQLDPNITSKRPLVLNAYGIGIAEGIDLPTTHYDRLQWLKSIGIPVNPEIRLCNGADEVLGFYRDIQNKRSSLGYDIDGTVLKINDIALQNELGFISKAPRWAIAYKFPAQEELTLLNDVEFQVGRTGAITPVAKLEPVFVAGVTVSNATLHNGDEIERLNIAIGDTVVIRRAGDVIPQIIGVLHERRPDNAKPIIFPTNCPVCDSQIIRIEGEAVARCTGGLFCAAQRKEALKHFVSRKAMDIDGVGGKLIEQLVDRELIHTPADLFKLDLTTLTRLERMGAKSAENALNSLENAKSTTLDRFIFALGIREVGEATALNLANHFKTLDALKDANLEELQQVPDVGEVVANRIFIFWREAHNVAVVEDLIAQGVHWETVEVKEASENLFKDKTVVLTGTLTQMGRNEAKALLQQLGAKVSGSVSSKTDFVIAGDGAGSKLAKAQELNITVLTEEEFLAQITR.

Residues 32 to 36 (DSEYD), 81 to 82 (SL), and Glu114 each bind NAD(+). Lys116 serves as the catalytic N6-AMP-lysine intermediate. NAD(+) contacts are provided by Arg137, Glu174, Lys291, and Lys315. Residues Cys409, Cys412, Cys427, and Cys433 each coordinate Zn(2+). The BRCT domain maps to 592–670 (ASENLFKDKT…EEEFLAQITR (79 aa)).

The protein belongs to the NAD-dependent DNA ligase family. LigA subfamily. The cofactor is Mg(2+). Mn(2+) is required as a cofactor.

It catalyses the reaction NAD(+) + (deoxyribonucleotide)n-3'-hydroxyl + 5'-phospho-(deoxyribonucleotide)m = (deoxyribonucleotide)n+m + AMP + beta-nicotinamide D-nucleotide.. DNA ligase that catalyzes the formation of phosphodiester linkages between 5'-phosphoryl and 3'-hydroxyl groups in double-stranded DNA using NAD as a coenzyme and as the energy source for the reaction. It is essential for DNA replication and repair of damaged DNA. This Haemophilus influenzae (strain 86-028NP) protein is DNA ligase.